A 189-amino-acid polypeptide reads, in one-letter code: HTH-type transcriptional regulator Hpr (189 aa).

One can recognise an HTH marR-type domain in the interval 12–156 (ALLYSHKIVQ…ISAIVRRLYG (145 aa)). Residues 62-85 (ISEIAKYGVMHVSTAFNFSKKLED) constitute a DNA-binding region (H-T-H motif).

As to quaternary structure, homodimer.

Functionally, negative regulator of protease production and sporulation. In Exiguobacterium sibiricum (strain DSM 17290 / CCUG 55495 / CIP 109462 / JCM 13490 / 255-15), this protein is HTH-type transcriptional regulator Hpr.